The primary structure comprises 245 residues: tRNA1(Val) (adenine(37)-N6)-methyltransferase (245 aa).

It belongs to the methyltransferase superfamily. tRNA (adenine-N(6)-)-methyltransferase family.

Its subcellular location is the cytoplasm. The enzyme catalyses adenosine(37) in tRNA1(Val) + S-adenosyl-L-methionine = N(6)-methyladenosine(37) in tRNA1(Val) + S-adenosyl-L-homocysteine + H(+). In terms of biological role, specifically methylates the adenine in position 37 of tRNA(1)(Val) (anticodon cmo5UAC). The sequence is that of tRNA1(Val) (adenine(37)-N6)-methyltransferase from Shigella sonnei (strain Ss046).